The chain runs to 274 residues: MLYIVDFDETITTYDTIHLLAEAVNKPEEWSVISDKYWQEYLAWREALPHSTTLTSYLPLLGGSRYLEEASIKRIEKSQYFSGLSEGALDNIVQLITLRAGFVEFINALVPDLRVSKTIFHVLSVNWSARVIEQTLLHHTDLTADLLCVHANDFDFDTSTNTTNGRILARNASSLLMNSTDKVREFRRIVQTDAVSSPLNVVYIGDSPTDFGCLQISPISILMRSNQKYYDILSRFEDVQLVDISEFPVQKAVPGKKIIYTCSDWCAIQKAFLA.

This sequence belongs to the CTO1 family.

It is found in the cytoplasm. The protein localises to the nucleus. The sequence is that of CTO1 family protein C17G9.12c from Schizosaccharomyces pombe (strain 972 / ATCC 24843) (Fission yeast).